Consider the following 129-residue polypeptide: Ribonuclease VapC12 (129 aa).

The Mg(2+) site is built by aspartate 5 and aspartate 94.

It belongs to the PINc/VapC protein family. Mg(2+) serves as cofactor.

Toxic component of a type II toxin-antitoxin (TA) system. An RNase. The cognate antitoxin is VapB12. The sequence is that of Ribonuclease VapC12 from Mycobacterium tuberculosis (strain CDC 1551 / Oshkosh).